The sequence spans 68 residues: Molybdenum-pterin-binding protein 1 (68 aa).

Residues 2–68 enclose the Mop domain; the sequence is SISARNQLKG…IKSTDVMILA (67 aa).

Functionally, binds one mole of molybdenum per mole of protein and contains a pterin. The sequence is that of Molybdenum-pterin-binding protein 1 (mopI) from Clostridium pasteurianum.